A 326-amino-acid chain; its full sequence is Flap endonuclease 1 (326 aa).

Residues 1–98 (MGVQFGDFIP…KTRKVRREMK (98 aa)) are N-domain. Asp-27, Asp-80, Glu-152, Glu-154, Asp-173, Asp-175, and Asp-224 together coordinate Mg(2+). An I-domain region spans residues 116–245 (EAAKYAKRVS…KRAYELVRSG (130 aa)). The tract at residues 317–325 (KQKTLDAWF) is interaction with PCNA.

This sequence belongs to the XPG/RAD2 endonuclease family. FEN1 subfamily. As to quaternary structure, interacts with PCNA. PCNA stimulates the nuclease activity without altering cleavage specificity. The cofactor is Mg(2+).

In terms of biological role, structure-specific nuclease with 5'-flap endonuclease and 5'-3' exonuclease activities involved in DNA replication and repair. During DNA replication, cleaves the 5'-overhanging flap structure that is generated by displacement synthesis when DNA polymerase encounters the 5'-end of a downstream Okazaki fragment. Binds the unpaired 3'-DNA end and kinks the DNA to facilitate 5' cleavage specificity. Cleaves one nucleotide into the double-stranded DNA from the junction in flap DNA, leaving a nick for ligation. Also involved in the base excision repair (BER) pathway. Acts as a genome stabilization factor that prevents flaps from equilibrating into structures that lead to duplications and deletions. Also possesses 5'-3' exonuclease activity on nicked or gapped double-stranded DNA. This chain is Flap endonuclease 1, found in Methanocaldococcus jannaschii (strain ATCC 43067 / DSM 2661 / JAL-1 / JCM 10045 / NBRC 100440) (Methanococcus jannaschii).